Reading from the N-terminus, the 301-residue chain is Phospholipase A1 VesT1.02 (301 aa).

Cystine bridges form between Cys-87–Cys-294, Cys-176–Cys-245, Cys-181–Cys-262, Cys-219–Cys-228, Cys-240–Cys-246, and Cys-267–Cys-269. Ser-137 (nucleophile) is an active-site residue. The active-site Charge relay system is the Asp-165. Residue His-230 is the Charge relay system of the active site.

It belongs to the AB hydrolase superfamily. Lipase family. Is not glycosylated. Expressed by the venom gland.

The protein resides in the secreted. It catalyses the reaction a 1,2-diacyl-sn-glycero-3-phosphocholine + H2O = a 2-acyl-sn-glycero-3-phosphocholine + a fatty acid + H(+). Functionally, catalyzes the hydrolysis of phosphatidylcholine with phospholipase A1 activity. Shows hemolytic activity. The chain is Phospholipase A1 VesT1.02 from Vespa tropica (Greater banded hornet).